The chain runs to 594 residues: Capsid vertex component 1 (594 aa).

Disordered stretches follow at residues 52–77 (GRSTGRAPGGDEDDAPASDDAEDAVG), 176–205 (NKRDRQHQLATTTNHRRRGGLRNNLDNGSD), 443–468 (ARRQRERSAPKPQELLFGPRNESGPP), and 575–594 (GRQEPETPRVSGRRLPFDDL). Positions 61-76 (GDEDDAPASDDAEDAV) are enriched in acidic residues.

This sequence belongs to the herpesviridae CVC1 protein family. Interacts (via C-terminus) with capsid vertex component 2/CVC2.

The protein resides in the virion. It localises to the host nucleus. Functionally, capsid vertex-specific component that plays a role during viral DNA encapsidation, assuring correct genome cleavage and presumably stabilizing capsids that contain full-length viral genomes. The chain is Capsid vertex component 1 from Homo sapiens (Human).